Consider the following 317-residue polypeptide: L-lactate dehydrogenase (317 aa).

NAD(+)-binding positions include V16, D37, K42, Y68, and 82-83 (GA). Substrate contacts are provided by Q85 and R91. NAD(+) contacts are provided by residues T104, 121–123 (ATN), and S146. Substrate is bound at residue 123 to 126 (NPVD). 151-154 (DTAR) contacts substrate. Positions 156 and 171 each coordinate beta-D-fructose 1,6-bisphosphate. The Proton acceptor role is filled by H178. Y222 bears the Phosphotyrosine mark. Substrate is bound at residue T231.

The protein belongs to the LDH/MDH superfamily. LDH family. In terms of assembly, homotetramer.

Its subcellular location is the cytoplasm. It catalyses the reaction (S)-lactate + NAD(+) = pyruvate + NADH + H(+). Its pathway is fermentation; pyruvate fermentation to lactate; (S)-lactate from pyruvate: step 1/1. With respect to regulation, allosterically activated by fructose 1,6-bisphosphate (FBP). Functionally, catalyzes the conversion of lactate to pyruvate. The protein is L-lactate dehydrogenase of Corynebacterium efficiens (strain DSM 44549 / YS-314 / AJ 12310 / JCM 11189 / NBRC 100395).